Reading from the N-terminus, the 198-residue chain is Glycerol-3-phosphate acyltransferase (198 aa).

A run of 5 helical transmembrane segments spans residues 10-30 (LIPI…WILV), 57-77 (GISF…ILIL), 86-106 (IMYL…WFLF), 118-138 (VVLS…AVVF), and 160-180 (AVTE…IVLI).

The protein belongs to the PlsY family. As to quaternary structure, probably interacts with PlsX.

It is found in the cell inner membrane. The enzyme catalyses an acyl phosphate + sn-glycerol 3-phosphate = a 1-acyl-sn-glycero-3-phosphate + phosphate. Its pathway is lipid metabolism; phospholipid metabolism. Catalyzes the transfer of an acyl group from acyl-phosphate (acyl-PO(4)) to glycerol-3-phosphate (G3P) to form lysophosphatidic acid (LPA). This enzyme utilizes acyl-phosphate as fatty acyl donor, but not acyl-CoA or acyl-ACP. This is Glycerol-3-phosphate acyltransferase from Anaplasma marginale (strain Florida).